A 489-amino-acid chain; its full sequence is Valine--tRNA ligase (489 aa).

The 'KMSKS' region motif lies at 482–486 (KMSKS). Lysine 485 lines the ATP pocket.

This sequence belongs to the class-I aminoacyl-tRNA synthetase family.

It catalyses the reaction tRNA(Val) + L-valine + ATP = L-valyl-tRNA(Val) + AMP + diphosphate. This chain is Valine--tRNA ligase (VALS), found in Trichomonas vaginalis.